The chain runs to 349 residues: Probable myosin light chain kinase DDB_G0275057 (349 aa).

A disordered region spans residues 1–33 (MGCFNSKEAGAGRPKTTTQQQQQATPEPTVTTA). The segment covering 16–33 (TTTQQQQQATPEPTVTTA) has biased composition (low complexity). Residues 56-313 (YVVGKELGRG…AKQCLDDLWL (258 aa)) enclose the Protein kinase domain. ATP contacts are provided by residues 62–70 (LGRGAFSVV) and lysine 85. The Proton acceptor role is filled by aspartate 178.

It belongs to the protein kinase superfamily. CAMK Ser/Thr protein kinase family. CaMK subfamily.

The catalysed reaction is L-seryl-[myosin light chain] + ATP = O-phospho-L-seryl-[myosin light chain] + ADP + H(+). The enzyme catalyses L-threonyl-[myosin light chain] + ATP = O-phospho-L-threonyl-[myosin light chain] + ADP + H(+). With respect to regulation, does not have a calmodulin-binding domain. Its function is as follows. May phosphorylate a specific serine in the N-terminus of a myosin light chain. The sequence is that of Probable myosin light chain kinase DDB_G0275057 from Dictyostelium discoideum (Social amoeba).